Consider the following 319-residue polypeptide: Putrescine hydroxycinnamoyltransferase 2 (319 aa).

Catalysis depends on proton acceptor residues His160 and Asp301.

The protein belongs to the plant acyltransferase family.

In terms of biological role, hydroxycinnamoyl transferase that catalyzes the transfer of an acyl from p-coumaryol-CoA to putrescine, to produce coumaroyl putrescine. The protein is Putrescine hydroxycinnamoyltransferase 2 of Oryza sativa subsp. japonica (Rice).